The chain runs to 120 residues: Prefoldin subunit beta (120 aa).

It belongs to the prefoldin subunit beta family. Heterohexamer of two alpha and four beta subunits.

It is found in the cytoplasm. Its function is as follows. Molecular chaperone capable of stabilizing a range of proteins. Seems to fulfill an ATP-independent, HSP70-like function in archaeal de novo protein folding. The sequence is that of Prefoldin subunit beta from Methanothrix thermoacetophila (strain DSM 6194 / JCM 14653 / NBRC 101360 / PT) (Methanosaeta thermophila).